Consider the following 751-residue polypeptide: Semaphorin-3C (751 aa).

The N-terminal stretch at 1-21 (MAVLALHAVFGIFIYFSSVKG) is a signal peptide. The Sema domain occupies 28–511 (RVFLTFNELQ…SEEGVTQVPL (484 aa)). A glycan (N-linked (GlcNAc...) asparagine) is linked at N81. A disulfide bond links C101 and C112. N123 carries N-linked (GlcNAc...) asparagine glycosylation. 3 disulfides stabilise this stretch: C130-C139, C266-C378, and C290-C338. N-linked (GlcNAc...) asparagine glycosylation is present at N268. The N-linked (GlcNAc...) asparagine glycan is linked to N465. C514 and C532 form a disulfide bridge. The region spanning 571–655 (AYRNAAETVQ…TENNFKQTLA (85 aa)) is the Ig-like C2-type domain. N-linked (GlcNAc...) asparagine glycosylation is found at N585 and N586. C643 and C709 are joined by a disulfide. A compositionally biased stretch (basic and acidic residues) spans 712–731 (SRQQGQRREEPQKMRGDYSK). Positions 712–751 (SRQQGQRREEPQKMRGDYSKLKALINSRKSRNRRNQLPAS) are disordered.

This sequence belongs to the semaphorin family. In terms of tissue distribution, collapsin-1, -2, -3, and -5 bind to overlapping but distinct axon tracts.

The protein localises to the secreted. Induces the collapse and paralysis of neuronal growth cones. Could potentially act as repulsive cues toward specific neuronal populations. Binds to neuropilin. The sequence is that of Semaphorin-3C (SEMA3C) from Gallus gallus (Chicken).